Consider the following 259-residue polypeptide: Proteasome subunit beta type-4 (259 aa).

It belongs to the peptidase T1B family. As to quaternary structure, the 26S proteasome consists of a 20S proteasome core and two 19S regulatory subunits. The 20S proteasome core is composed of 28 subunits that are arranged in four stacked rings, resulting in a barrel-shaped structure. The two end rings are each formed by seven alpha subunits, and the two central rings are each formed by seven beta subunits. The catalytic chamber with the active sites is on the inside of the barrel.

The protein localises to the cytoplasm. It localises to the nucleus. Its function is as follows. Non-catalytic component of the proteasome, a multicatalytic proteinase complex which is characterized by its ability to cleave peptides with Arg, Phe, Tyr, Leu, and Glu adjacent to the leaving group at neutral or slightly basic pH. The proteasome has an ATP-dependent proteolytic activity. The sequence is that of Proteasome subunit beta type-4 (psmB4-1) from Dictyostelium discoideum (Social amoeba).